A 1235-amino-acid chain; its full sequence is MSLNIPPKPEESLWTDDQWKAIQAKGNNVLVAAAAGSGKTAVLVTRIIEKLIDESANLNVDELLIVTFTNASAAEMKFRIGKGLEEALGQNPDSAHLKRQVALLNYASISTLHSFCLEIIRKYYFEADIDPSFRLIEPIESSMIRDEVLEGLLEQEYGIENNEAFFHLVESFTGDRSDAELHSLISKLYDFSRANPDPNAWLEAMVNFYNTEEITSITELPYFPIIKEDIELRVNQAKNYLLNAINYANENNGPAPYLATLENDLVQIQALSELNWSSWTHLKTSIENIDFKRIPTLKNKSDYDEVYVEEAKKFRDAAKKEMKNIATDWFSREEVNCLSDLEKMKPDIQTLSELVKKFSANFFEEKQQRGVLDFNDLEHLALKILLNDDKASEVAQNYQKQFKEVLIDEYQDTNMVQETILRLVTNPSEAQGNLFMVGDVKQSIYRFRLAEPTLFMTKYQTFQQDGSGNGIRIDLSQNFRSRKEVLDATNFIFRQLMDKHIAEIDYDTAAELTLGANFPETNAMETELLLIDMKTEDTETEDELSPQELQKNQVESRAIAMKIREMIDNKFPIYDKKLKQNRPIQYRDIIILSRAMTSAPDMEEAMKVQDIPFYANNNSGYFETTEVATMIALMKVVDNPYQDIPLAAVLRSPIIGLNEEELGQIRMAKKKGYFYDALLTYKDITVSETANKISDFVQQLNNWRELSIRENLTSLIWQIYQETNFYEFVGGLPGGKQRQANLRALYDRANQYEKTSFRGLFRFVRFVERLEIRGDDLGTAKTLGEKEDVVRMMTIHASKGLEFPVVIVSGLSRKFNMRDIYSKTLLDKDYGFASSYRDVEKMIVYPTIMQQAIKQKKSREMIAEEMRVLYVALTRAEEKLILVATVPDFEKTSKNWLQVAKEKETILPAATRAKAKCYLDWIGNATIRHPAFKELLCEEIIQTLATEMKLQIEIKTKEMFLTNELERAESDNWLENIKEHQPVPIQSPYKDEIQRYMEYEYQNEAATEIRAKQSVTELKRQFSLQDSWSDTTLLKEFQKVSLDRPKFLQKNKLSATEIGTAMHTLMQAVSLDYKPTKEDLEQLLHTMREKDILTDVQIKAINIKQILDFFESPLGETMLQKKDLVKREVPFSYLLPVSELYEKVDLDERVLIQGVVDSMIEEEETITLIDYKTDKIEGRYADWNAAEKVMKERYHIQIKLYAEAIQAISGKKVAAAYLYFFDGQHICQINTKEGL.

The 471-residue stretch at 12–482 folds into the UvrD-like helicase ATP-binding domain; the sequence is SLWTDDQWKA…IDLSQNFRSR (471 aa). ATP is bound at residue 33–40; sequence AAAGSGKT. The UvrD-like helicase C-terminal domain occupies 509 to 800; that stretch reads AAELTLGANF…RMMTIHASKG (292 aa).

It belongs to the helicase family. AddA subfamily. In terms of assembly, heterodimer of AddA and AddB/RexB. Requires Mg(2+) as cofactor.

It carries out the reaction Couples ATP hydrolysis with the unwinding of duplex DNA by translocating in the 3'-5' direction.. It catalyses the reaction ATP + H2O = ADP + phosphate + H(+). Its function is as follows. The heterodimer acts as both an ATP-dependent DNA helicase and an ATP-dependent, dual-direction single-stranded exonuclease. Recognizes the chi site generating a DNA molecule suitable for the initiation of homologous recombination. The AddA nuclease domain is required for chi fragment generation; this subunit has the helicase and 3' -&gt; 5' nuclease activities. In Listeria monocytogenes serovar 1/2a (strain ATCC BAA-679 / EGD-e), this protein is ATP-dependent helicase/nuclease subunit A.